We begin with the raw amino-acid sequence, 182 residues long: ATP-dependent protease subunit HslV (182 aa).

Residue Thr10 is part of the active site. The Na(+) site is built by Ala164, Cys167, and Thr170.

Belongs to the peptidase T1B family. HslV subfamily. As to quaternary structure, a double ring-shaped homohexamer of HslV is capped on each side by a ring-shaped HslU homohexamer. The assembly of the HslU/HslV complex is dependent on binding of ATP.

Its subcellular location is the cytoplasm. It carries out the reaction ATP-dependent cleavage of peptide bonds with broad specificity.. Its activity is regulated as follows. Allosterically activated by HslU binding. Its function is as follows. Protease subunit of a proteasome-like degradation complex believed to be a general protein degrading machinery. In Chelativorans sp. (strain BNC1), this protein is ATP-dependent protease subunit HslV.